The sequence spans 132 residues: Small ribosomal subunit protein uS8 (132 aa).

This sequence belongs to the universal ribosomal protein uS8 family. Part of the 30S ribosomal subunit. Contacts proteins S5 and S12.

One of the primary rRNA binding proteins, it binds directly to 16S rRNA central domain where it helps coordinate assembly of the platform of the 30S subunit. The chain is Small ribosomal subunit protein uS8 from Staphylococcus saprophyticus subsp. saprophyticus (strain ATCC 15305 / DSM 20229 / NCIMB 8711 / NCTC 7292 / S-41).